A 237-amino-acid chain; its full sequence is Ribosomal RNA small subunit methyltransferase G (237 aa).

S-adenosyl-L-methionine is bound by residues Gly78, Phe83, Ala129 to Glu130, and Arg148. Residues Ser216–Leu237 are disordered.

The protein belongs to the methyltransferase superfamily. RNA methyltransferase RsmG family.

It is found in the cytoplasm. Its function is as follows. Specifically methylates the N7 position of a guanine in 16S rRNA. The polypeptide is Ribosomal RNA small subunit methyltransferase G (Streptococcus agalactiae serotype III (strain NEM316)).